Consider the following 235-residue polypeptide: Urease accessory protein UreF (235 aa).

The protein belongs to the UreF family. In terms of assembly, ureD, UreF and UreG form a complex that acts as a GTP-hydrolysis-dependent molecular chaperone, activating the urease apoprotein by helping to assemble the nickel containing metallocenter of UreC. The UreE protein probably delivers the nickel.

The protein resides in the cytoplasm. Required for maturation of urease via the functional incorporation of the urease nickel metallocenter. This is Urease accessory protein UreF from Haemophilus influenzae (strain PittEE).